We begin with the raw amino-acid sequence, 393 residues long: Metal tolerance protein C2 (393 aa).

The segment at M1–V23 is disordered. The Cytoplasmic portion of the chain corresponds to M1–R113. Positions G11–S21 are enriched in basic and acidic residues. A helical transmembrane segment spans residues L114–F134. The Vacuolar portion of the chain corresponds to T135–G139. Residues L140–A160 traverse the membrane as a helical segment. At M161–T186 the chain is on the cytoplasmic side. A helical membrane pass occupies residues N187–I207. Topologically, residues Q208 to K214 are vacuolar. Residues H215–F235 form a helical membrane-spanning segment. At R236–H259 the chain is on the cytoplasmic side. The chain crosses the membrane as a helical span at residues V260–G280. The Vacuolar segment spans residues V281–N283. Residues A284–F304 traverse the membrane as a helical segment. Residues K305–T393 lie on the Cytoplasmic side of the membrane.

The protein belongs to the cation diffusion facilitator (CDF) transporter (TC 2.A.4) family.

It localises to the vacuole membrane. In terms of biological role, involved in sequestration of excess metal in the cytoplasm into vacuoles to maintain metal homeostasis. This is Metal tolerance protein C2 (MTPC2) from Arabidopsis thaliana (Mouse-ear cress).